The sequence spans 136 residues: NADPH-dependent 7-cyano-7-deazaguanine reductase (136 aa).

Catalysis depends on cysteine 50, which acts as the Thioimide intermediate. The Proton donor role is filled by aspartate 57. Substrate is bound by residues 72–74 (YEL) and 91–92 (HE).

The protein belongs to the GTP cyclohydrolase I family. QueF type 1 subfamily.

The protein resides in the cytoplasm. It carries out the reaction 7-aminomethyl-7-carbaguanine + 2 NADP(+) = 7-cyano-7-deazaguanine + 2 NADPH + 3 H(+). It participates in tRNA modification; tRNA-queuosine biosynthesis. Catalyzes the NADPH-dependent reduction of 7-cyano-7-deazaguanine (preQ0) to 7-aminomethyl-7-deazaguanine (preQ1). The chain is NADPH-dependent 7-cyano-7-deazaguanine reductase from Prochlorococcus marinus (strain MIT 9215).